The chain runs to 495 residues: Histidine--tRNA ligase (495 aa).

Positions 1 to 10 are enriched in polar residues; it reads MTTDSEQPNT. Residues 1-24 form a disordered region; that stretch reads MTTDSEQPNTDFRPEARAPRGFAD. Residues 12–24 are compositionally biased toward basic and acidic residues; it reads FRPEARAPRGFAD.

The protein belongs to the class-II aminoacyl-tRNA synthetase family. Homodimer.

Its subcellular location is the cytoplasm. It carries out the reaction tRNA(His) + L-histidine + ATP = L-histidyl-tRNA(His) + AMP + diphosphate + H(+). The polypeptide is Histidine--tRNA ligase (hisS) (Caulobacter vibrioides (strain ATCC 19089 / CIP 103742 / CB 15) (Caulobacter crescentus)).